Reading from the N-terminus, the 154-residue chain is SsrA-binding protein (154 aa).

It belongs to the SmpB family.

It is found in the cytoplasm. Required for rescue of stalled ribosomes mediated by trans-translation. Binds to transfer-messenger RNA (tmRNA), required for stable association of tmRNA with ribosomes. tmRNA and SmpB together mimic tRNA shape, replacing the anticodon stem-loop with SmpB. tmRNA is encoded by the ssrA gene; the 2 termini fold to resemble tRNA(Ala) and it encodes a 'tag peptide', a short internal open reading frame. During trans-translation Ala-aminoacylated tmRNA acts like a tRNA, entering the A-site of stalled ribosomes, displacing the stalled mRNA. The ribosome then switches to translate the ORF on the tmRNA; the nascent peptide is terminated with the 'tag peptide' encoded by the tmRNA and targeted for degradation. The ribosome is freed to recommence translation, which seems to be the essential function of trans-translation. This is SsrA-binding protein from Lachnoclostridium phytofermentans (strain ATCC 700394 / DSM 18823 / ISDg) (Clostridium phytofermentans).